The primary structure comprises 82 residues: Costars family protein v1g158749 (82 aa).

It belongs to the costars family.

The chain is Costars family protein v1g158749 from Nematostella vectensis (Starlet sea anemone).